The sequence spans 820 residues: Probable protease Ga0182885_104520 (820 aa).

The protein belongs to the peptidase C25 family.

Functionally, probably a dedicated protease for substrate gasdermin bGSDM; cleaves the bGSDM precursor, releasing the pore-forming moiety, which integrates into the membrane and triggers cell death. Involved in defense against bacteriophages. Expression of bacterial gasdermin (bGSDM) and this neighboring protease is toxic in E.coli. The polypeptide is Probable protease Ga0182885_104520 (Desulfuromonadales bacterium).